The sequence spans 331 residues: UDP-GalNAc:beta-1,3-N-acetylgalactosaminyltransferase 1 (331 aa).

Residues 1 to 20 (MAPAVLTAIPNRMSLRSLKW) lie on the Cytoplasmic side of the membrane. Residues 21-43 (SLLLLSLLSFLVIWYLSLPHYNV) traverse the membrane as a helical; Signal-anchor for type II membrane protein segment. At 44 to 331 (IERVNWMYFY…VMLRNTTCHY (288 aa)) the chain is on the lumenal side. 5 N-linked (GlcNAc...) asparagine glycosylation sites follow: N72, N154, N198, N212, and N326.

This sequence belongs to the glycosyltransferase 31 family. Mg(2+) is required as a cofactor.

The protein resides in the golgi apparatus membrane. It catalyses the reaction a globoside Gb3Cer (d18:1(4E)) + UDP-N-acetyl-alpha-D-galactosamine = a globoside Gb4Cer (d18:1(4E)) + UDP + H(+). The protein operates within protein modification; protein glycosylation. Transfers N-acetylgalactosamine onto globotriaosylceramide. Plays a critical role in preimplantation stage embryonic development. This Rattus norvegicus (Rat) protein is UDP-GalNAc:beta-1,3-N-acetylgalactosaminyltransferase 1 (B3galnt1).